A 251-amino-acid chain; its full sequence is Hydroxyacylglutathione hydrolase (251 aa).

Zn(2+) is bound by residues His53, His55, Asp57, His58, His110, Asp127, and His165.

The protein belongs to the metallo-beta-lactamase superfamily. Glyoxalase II family. Monomer. It depends on Zn(2+) as a cofactor.

It catalyses the reaction an S-(2-hydroxyacyl)glutathione + H2O = a 2-hydroxy carboxylate + glutathione + H(+). It functions in the pathway secondary metabolite metabolism; methylglyoxal degradation; (R)-lactate from methylglyoxal: step 2/2. In terms of biological role, thiolesterase that catalyzes the hydrolysis of S-D-lactoyl-glutathione to form glutathione and D-lactic acid. The chain is Hydroxyacylglutathione hydrolase from Salmonella agona (strain SL483).